The primary structure comprises 430 residues: ATP-dependent RNA helicase RhlB (430 aa).

The Q motif motif lies at 9–37 (QKFSDFALHPQVIEALETKGFHNCTPIQA). A Helicase ATP-binding domain is found at 40-219 (LPFTLSGRDV…FENMNNAEYV (180 aa)). 53–60 (AQTGTGKT) serves as a coordination point for ATP. The DEAD box motif lies at 165 to 168 (DEAD). Residues 245-390 (RLLQTLIEEE…VSRYNSDALM (146 aa)) form the Helicase C-terminal domain. The tract at residues 388–430 (ALMTDLPPPKRLTRNRSGNGPRRGGNNNRRSSASRSPNRKRSG) is disordered. Residues 402-423 (NRSGNGPRRGGNNNRRSSASRS) show a composition bias toward low complexity.

The protein belongs to the DEAD box helicase family. RhlB subfamily. Component of the RNA degradosome, which is a multiprotein complex involved in RNA processing and mRNA degradation.

Its subcellular location is the cytoplasm. It carries out the reaction ATP + H2O = ADP + phosphate + H(+). DEAD-box RNA helicase involved in RNA degradation. Has RNA-dependent ATPase activity and unwinds double-stranded RNA. This Erwinia tasmaniensis (strain DSM 17950 / CFBP 7177 / CIP 109463 / NCPPB 4357 / Et1/99) protein is ATP-dependent RNA helicase RhlB.